We begin with the raw amino-acid sequence, 284 residues long: Efem/EfeO family lipoprotein (284 aa).

An N-terminal signal peptide occupies residues 1–17 (MKKLTTLLLASTLLIAA). A lipid anchor (N-palmitoyl cysteine) is attached at Cys-18. Cys-18 carries the S-diacylglycerol cysteine lipid modification.

It belongs to the EfeM/EfeO family.

The protein resides in the cell membrane. This Staphylococcus aureus (strain MRSA252) protein is Efem/EfeO family lipoprotein.